The following is a 42-amino-acid chain: Large ribosomal subunit protein bL36 (42 aa).

The protein belongs to the bacterial ribosomal protein bL36 family.

The sequence is that of Large ribosomal subunit protein bL36 from Ehrlichia chaffeensis (strain ATCC CRL-10679 / Arkansas).